Reading from the N-terminus, the 473-residue chain is Myocyte-specific enhancer factor 2C (473 aa).

Residues 1–61 (MGRKKIQITR…NKLFQYASTD (61 aa)) enclose the MADS-box domain. An N6-acetyllysine modification is found at lysine 4. Positions 58–86 (ASTDMDKVLLKYTEYNEPHESRTNSDIVE) form a DNA-binding region, mef2-type. The residue at position 59 (serine 59) is a Phosphoserine; by CK2. Residues 91–116 (KGLNGCDSPDPDADDSVGHSPESEDK) are disordered. Residues serine 98, serine 106, and serine 110 each carry the phosphoserine modification. Lysine 116 and lysine 119 each carry N6-acetyllysine. The segment at 180–206 (NSMSPGVTHRPPSAGNTGGLMGGDLTS) is disordered. Phosphoserine is present on residues serine 222 and serine 228. N6-acetyllysine occurs at positions 234 and 239. Serine 240 is modified (phosphoserine). N6-acetyllysine is present on residues lysine 252 and lysine 264. The segment at 271 to 278 (SEDVDLLL) is beta domain. Threonine 293 and threonine 300 each carry phosphothreonine; by MAPK14. The transcription repressor stretch occupies residues 368–399 (ACTSTHLSQSSNLSLPSTQSLNIKSEPVSPPR). A compositionally biased stretch (polar residues) spans 375–390 (SQSSNLSLPSTQSLNI). Residues 375–473 (SQSSNLSLPS…RMRLSEGWAT (99 aa)) are disordered. Residue lysine 391 forms a Glycyl lysine isopeptide (Lys-Gly) (interchain with G-Cter in SUMO) linkage. Serine 396 carries the phosphoserine; by CDK5 modification. Phosphoserine; by MAPK7 is present on serine 419. The segment covering 419–432 (SPVDSLSSCSSSYD) has biased composition (low complexity). The segment covering 433-443 (GSDREDHRNEF) has biased composition (basic and acidic residues). Serine 445 is subject to Phosphoserine.

The protein belongs to the MEF2 family. In terms of assembly, forms a complex with class II HDACs in undifferentiating cells. On myogenic differentiation, HDACs are released into the cytoplasm allowing MEF2s to interact with other proteins for activation. Interacts with EP300 in differentiating cells; the interaction acetylates MEF2C leading to increased DNA binding and activation. Interacts with HDAC7 and CARM1. Interacts with HDAC4 and HDAC9; the interaction with HDACs represses transcriptional activity. Interacts with LPIN1. Interacts with MYOCD. Interacts with AKAP13. Interacts with FOXK1; the interaction inhibits MEF2C transactivation activity. Interacts (via N-terminus) with HABP4; this interaction decreases DNA-binding activity of MEF2C in myocardial cells in response to mechanical stress. Interacts with JPH2; interaction specifically takes place with the Junctophilin-2 N-terminal fragment cleavage product of JPH2. Interacts (via MADS box) with SOX18. Interacts with PHF7; the interaction promotes MEF2C binding to its transcription targets. Post-translationally, phosphorylated on Ser-59; which enhances DNA binding activity. Phosphorylated on Ser-396; which is required for Lys-391 sumoylation and inhibits transcriptional activity. In terms of processing, acetylated by p300 on several sites in diffentiating myocytes. Acetylation on Lys-4 increases DNA binding and transactivation. Sumoylated on Lys-391 with SUMO2 but not SUMO1; which represses transcriptional activity. Post-translationally, proteolytically cleaved in cerebellar granule neurons on several sites by caspase 3 and caspase 7 following neurotoxicity. Preferentially cleaves the CDK5-mediated hyperphosphorylated form which leads to neuron apoptosis and transcriptional inactivation. In terms of tissue distribution, expressed in the heart. Expressed in cardiac myocytes (at protein level).

It localises to the nucleus. The protein localises to the cytoplasm. It is found in the sarcoplasm. Transcription activator which binds specifically to the MEF2 element present in the regulatory regions of many muscle-specific genes. Controls cardiac morphogenesis and myogenesis, and is also involved in vascular development. Enhances transcriptional activation mediated by SOX18. Plays an essential role in hippocampal-dependent learning and memory by suppressing the number of excitatory synapses and thus regulating basal and evoked synaptic transmission. Crucial for normal neuronal development, distribution, and electrical activity in the neocortex. Necessary for proper development of megakaryocytes and platelets and for bone marrow B-lymphopoiesis. Required for B-cell survival and proliferation in response to BCR stimulation, efficient IgG1 antibody responses to T-cell-dependent antigens and for normal induction of germinal center B-cells. May also be involved in neurogenesis and in the development of cortical architecture. The polypeptide is Myocyte-specific enhancer factor 2C (Rattus norvegicus (Rat)).